A 229-amino-acid chain; its full sequence is ATP synthase subunit a 1 (229 aa).

Helical transmembrane passes span 25-45, 86-106, 111-131, 142-162, 181-201, and 202-222; these read ADAV…SFLA, VATV…PGFF, NINT…VVGI, FCGP…IGHL, LVLI…MMLM, and GVLV…IYIQ.

It belongs to the ATPase A chain family. F-type ATPases have 2 components, CF(1) - the catalytic core - and CF(0) - the membrane proton channel. CF(1) has five subunits: alpha(3), beta(3), gamma(1), delta(1), epsilon(1). CF(0) has three main subunits: a(1), b(2) and c(9-12). The alpha and beta chains form an alternating ring which encloses part of the gamma chain. CF(1) is attached to CF(0) by a central stalk formed by the gamma and epsilon chains, while a peripheral stalk is formed by the delta and b chains.

It is found in the cell inner membrane. Functionally, key component of the proton channel; it plays a direct role in the translocation of protons across the membrane. The sequence is that of ATP synthase subunit a 1 from Pelobacter propionicus (strain DSM 2379 / NBRC 103807 / OttBd1).